Reading from the N-terminus, the 1024-residue chain is Beta-galactosidase (1024 aa).

Substrate is bound by residues Asn103 and Asp202. Asp202 is a binding site for Na(+). Residues Glu417, His419, and Glu462 each contribute to the Mg(2+) site. Substrate is bound by residues Glu462 and 538-541; that span reads EYAH. Glu462 functions as the Proton donor in the catalytic mechanism. Glu538 acts as the Nucleophile in catalysis. Mg(2+) is bound at residue Asn598. Residues Phe602 and Asn605 each contribute to the Na(+) site. Asn605 and Trp1000 together coordinate substrate.

The protein belongs to the glycosyl hydrolase 2 family. As to quaternary structure, homotetramer. It depends on Mg(2+) as a cofactor. Requires Na(+) as cofactor.

The catalysed reaction is Hydrolysis of terminal non-reducing beta-D-galactose residues in beta-D-galactosides.. The chain is Beta-galactosidase from Shigella sonnei (strain Ss046).